Here is a 478-residue protein sequence, read N- to C-terminus: Probable L-ascorbate peroxidase 8, chloroplastic (478 aa).

The span at 1–13 (MAERIAASLLPAA) shows a compositional bias: low complexity. 2 disordered regions span residues 1-31 (MAER…VSAA) and 44-66 (GGLR…RSGR). The N-terminal 76 residues, 1–76 (MAERIAASLL…AGAGARAVVR (76 aa)), are a transit peptide targeting the chloroplast. Residues 14 to 26 (SPSPAPSPPPPRP) are compositionally biased toward pro residues. His-117 acts as the Proton acceptor in catalysis. A disordered region spans residues 245–276 (AHTLGRSRPDRSGWGKPETKYTKDGPGEPGGQ). His-246 provides a ligand contact to heme b. Residue Thr-247 participates in K(+) binding. Residues 251–270 (SRPDRSGWGKPETKYTKDGP) show a composition bias toward basic and acidic residues. Thr-279 and Asp-286 together coordinate K(+). A disordered region spans residues 346–417 (AKFDPPEGFS…DNNGAAPQPE (72 aa)). Pro residues predominate over residues 369–381 (PAPAPAAAPPPPP). Over residues 394–406 (PVTVGAAVASSPA) the composition is skewed to low complexity. Residues 458 to 478 (YFLNIMLLIGGLAFLTSLLGS) traverse the membrane as a helical segment.

It belongs to the peroxidase family. Ascorbate peroxidase subfamily. Interacts with SWEET11/OS8N3. Heme b serves as cofactor. Expressed in roots, leaves, stems and flowers. Expressed in leaves, shoots and panicles. Expressed at low levels in roots.

Its subcellular location is the plastid. It is found in the chloroplast thylakoid membrane. The catalysed reaction is L-ascorbate + H2O2 = L-dehydroascorbate + 2 H2O. In terms of biological role, involved in defense response and tolerance to the bacterial pathogen Xanthomonas oryzae pv. oryzae (Xoo). Plays an important role in hydrogen peroxide removal during infection by Xoo. Involved in response to abiotic stress. Plays a role in hydrogen peroxide removal durings salt stress. The chain is Probable L-ascorbate peroxidase 8, chloroplastic from Oryza sativa subsp. japonica (Rice).